The primary structure comprises 89 residues: Small ribosomal subunit protein uS14A (89 aa).

Belongs to the universal ribosomal protein uS14 family. As to quaternary structure, part of the 30S ribosomal subunit. Contacts proteins S3 and S10.

Binds 16S rRNA, required for the assembly of 30S particles and may also be responsible for determining the conformation of the 16S rRNA at the A site. This is Small ribosomal subunit protein uS14A from Streptococcus agalactiae serotype Ia (strain ATCC 27591 / A909 / CDC SS700).